Here is a 547-residue protein sequence, read N- to C-terminus: CTP synthase (547 aa).

Positions 1–267 (MKTKFIFITG…DQKIAIMLRL (267 aa)) are amidoligase domain. Residue Ser-14 coordinates CTP. Ser-14 is a UTP binding site. Residues 15–20 (SLGKGL) and Asp-72 each bind ATP. Residues Asp-72 and Glu-141 each coordinate Mg(2+). CTP-binding positions include 148-150 (DIE), 188-193 (KTKPTQ), and Lys-224. UTP is bound by residues 188-193 (KTKPTQ) and Lys-224. Residues 292 to 545 (TIGIVGKYVD…IRAAKTHPAG (254 aa)) enclose the Glutamine amidotransferase type-1 domain. An L-glutamine-binding site is contributed by Gly-354. The active-site Nucleophile; for glutamine hydrolysis is Cys-381. L-glutamine is bound by residues 382–385 (LGMQ), Glu-405, and Arg-473. Catalysis depends on residues His-518 and Glu-520.

The protein belongs to the CTP synthase family. In terms of assembly, homotetramer.

The enzyme catalyses UTP + L-glutamine + ATP + H2O = CTP + L-glutamate + ADP + phosphate + 2 H(+). The catalysed reaction is L-glutamine + H2O = L-glutamate + NH4(+). It catalyses the reaction UTP + NH4(+) + ATP = CTP + ADP + phosphate + 2 H(+). The protein operates within pyrimidine metabolism; CTP biosynthesis via de novo pathway; CTP from UDP: step 2/2. Allosterically activated by GTP, when glutamine is the substrate; GTP has no effect on the reaction when ammonia is the substrate. The allosteric effector GTP functions by stabilizing the protein conformation that binds the tetrahedral intermediate(s) formed during glutamine hydrolysis. Inhibited by the product CTP, via allosteric rather than competitive inhibition. Its function is as follows. Catalyzes the ATP-dependent amination of UTP to CTP with either L-glutamine or ammonia as the source of nitrogen. Regulates intracellular CTP levels through interactions with the four ribonucleotide triphosphates. The protein is CTP synthase of Nitratidesulfovibrio vulgaris (strain DP4) (Desulfovibrio vulgaris).